Consider the following 92-residue polypeptide: MARSIKKGPFVDEHLMKKVEAQEGSEKKQVIKTWSRRSTIFPNFIGHTFAVYDGRKHVPVYVTEDMVGHKLGEFAPTRTFKGHVADDKKTRR.

Belongs to the universal ribosomal protein uS19 family.

Its function is as follows. Protein S19 forms a complex with S13 that binds strongly to the 16S ribosomal RNA. The chain is Small ribosomal subunit protein uS19 from Staphylococcus aureus (strain Mu3 / ATCC 700698).